A 187-amino-acid polypeptide reads, in one-letter code: Transcriptional regulator VspR (187 aa).

Its function is as follows. Represses the transcription of several genes encoded within the Vibrio 7th pandemic island-1 (VSP-1), including dncV, VC_0176, VC_0178 and VC_0180. The sequence is that of Transcriptional regulator VspR (vspR) from Vibrio cholerae serotype O1 (strain ATCC 39315 / El Tor Inaba N16961).